The primary structure comprises 651 residues: UvrABC system protein C (651 aa).

Residues 21-100 (TEPGCYLMRD…IKNQQPHFNV (80 aa)) form the GIY-YIG domain. One can recognise a UVR domain in the interval 210 to 245 (DELRQLLNQQMERYAERLDFESAARIRDQLQGIDQL).

Belongs to the UvrC family. Interacts with UvrB in an incision complex.

It is found in the cytoplasm. In terms of biological role, the UvrABC repair system catalyzes the recognition and processing of DNA lesions. UvrC both incises the 5' and 3' sides of the lesion. The N-terminal half is responsible for the 3' incision and the C-terminal half is responsible for the 5' incision. The chain is UvrABC system protein C from Synechococcus sp. (strain CC9311).